A 601-amino-acid polypeptide reads, in one-letter code: Threonine dehydratase (601 aa).

Residues 1–51 (MEVLCQAPAGNSNFACNPKFTAIRTRAISSNDTFKVISSTGNNKKMKGAIR) constitute a chloroplast transit peptide. 2 consecutive ACT-like domains span residues 427-499 (ALLA…NLTN) and 521-592 (IFCQ…IESL).

The protein belongs to the serine/threonine dehydratase family. The cofactor is pyridoxal 5'-phosphate.

Its subcellular location is the plastid. The protein localises to the chloroplast. The enzyme catalyses L-threonine = 2-oxobutanoate + NH4(+). It participates in amino-acid biosynthesis; L-isoleucine biosynthesis; 2-oxobutanoate from L-threonine: step 1/1. Its function is as follows. Catalyzes the conversion of threonine to alpha-keto butyrate in isoleucine (Ile) biosynthesis. Required for JA-Ile biosynthesis, a signaling molecule involved in defense and resistance to the herbivore Manduca sexta caterpillars. The polypeptide is Threonine dehydratase (Nicotiana attenuata (Coyote tobacco)).